A 474-amino-acid chain; its full sequence is Cobyric acid synthase (474 aa).

The region spanning 251–431 is the GATase cobBQ-type domain; it reads TGFVAIPRLP…LHGLLENSAY (181 aa). Cys-328 functions as the Nucleophile in the catalytic mechanism. Residue His-423 is part of the active site.

This sequence belongs to the CobB/CobQ family. CobQ subfamily.

Its pathway is cofactor biosynthesis; adenosylcobalamin biosynthesis. In terms of biological role, catalyzes amidations at positions B, D, E, and G on adenosylcobyrinic A,C-diamide. NH(2) groups are provided by glutamine, and one molecule of ATP is hydrogenolyzed for each amidation. In Deinococcus radiodurans (strain ATCC 13939 / DSM 20539 / JCM 16871 / CCUG 27074 / LMG 4051 / NBRC 15346 / NCIMB 9279 / VKM B-1422 / R1), this protein is Cobyric acid synthase.